A 174-amino-acid polypeptide reads, in one-letter code: Transcription antitermination protein NusB (174 aa).

Belongs to the NusB family.

Its function is as follows. Involved in transcription antitermination. Required for transcription of ribosomal RNA (rRNA) genes. Binds specifically to the boxA antiterminator sequence of the ribosomal RNA (rrn) operons. The polypeptide is Transcription antitermination protein NusB (Rhodopseudomonas palustris (strain ATCC BAA-98 / CGA009)).